The primary structure comprises 162 residues: NADH-quinone oxidoreductase subunit I (162 aa).

2 4Fe-4S ferredoxin-type domains span residues 53-83 (LRRY…IDSA) and 93-122 (TRYD…ETHI). 8 residues coordinate [4Fe-4S] cluster: C63, C66, C69, C73, C102, C105, C108, and C112.

The protein belongs to the complex I 23 kDa subunit family. NDH-1 is composed of 14 different subunits. Subunits NuoA, H, J, K, L, M, N constitute the membrane sector of the complex. [4Fe-4S] cluster serves as cofactor.

It is found in the cell inner membrane. It catalyses the reaction a quinone + NADH + 5 H(+)(in) = a quinol + NAD(+) + 4 H(+)(out). Its function is as follows. NDH-1 shuttles electrons from NADH, via FMN and iron-sulfur (Fe-S) centers, to quinones in the respiratory chain. The immediate electron acceptor for the enzyme in this species is believed to be ubiquinone. Couples the redox reaction to proton translocation (for every two electrons transferred, four hydrogen ions are translocated across the cytoplasmic membrane), and thus conserves the redox energy in a proton gradient. The chain is NADH-quinone oxidoreductase subunit I from Xanthomonas oryzae pv. oryzae (strain MAFF 311018).